A 187-amino-acid polypeptide reads, in one-letter code: dITP/XTP pyrophosphatase (187 aa).

Residue 7-12 (TGNKHK) participates in substrate binding. Mg(2+) is bound by residues Glu-36 and Asp-64. The active-site Proton acceptor is Asp-64. Substrate is bound by residues Ala-65, 140–143 (FAFD), Lys-163, and 168–169 (HR).

It belongs to the HAM1 NTPase family. In terms of assembly, homodimer. Requires Mg(2+) as cofactor.

The enzyme catalyses XTP + H2O = XMP + diphosphate + H(+). It catalyses the reaction dITP + H2O = dIMP + diphosphate + H(+). The catalysed reaction is ITP + H2O = IMP + diphosphate + H(+). Its function is as follows. Pyrophosphatase that catalyzes the hydrolysis of nucleoside triphosphates to their monophosphate derivatives, with a high preference for the non-canonical purine nucleotides XTP (xanthosine triphosphate), dITP (deoxyinosine triphosphate) and ITP. Seems to function as a house-cleaning enzyme that removes non-canonical purine nucleotides from the nucleotide pool, thus preventing their incorporation into DNA/RNA and avoiding chromosomal lesions. The polypeptide is dITP/XTP pyrophosphatase (Methanothermobacter marburgensis (strain ATCC BAA-927 / DSM 2133 / JCM 14651 / NBRC 100331 / OCM 82 / Marburg) (Methanobacterium thermoautotrophicum)).